We begin with the raw amino-acid sequence, 497 residues long: MSAIPGFGGDLNSNIDEDSNLNKSSVVEINGQSEWRFEVPFRTIMKLKVVNGIGEIFGTELPLNVEISLTGVKYAIYAPLDEGCKVEYYCVSNKANSTSTNEDDEISEYISEETSMNHYMNLHFALESYRQSISEHNFVNSSSQKTGPRVLVVGNRHSGKTSLVKTLASYGCKMDRSPILVNLNPRDGVFSVPGSLTATPISDAFDLESVNGWGGSTTSGSTFHNPKQPLVKNYGFTSHSDNLDLYKYQISKLGVAVVSRMEEDIAVKNSGLLIDTPPLSIKDFTIIENIVSDFEVNIIVVIGNERLLIDLKKKFKHKIASSQLDFVKVPKSGGVIEVDDAYIRKSQEESIKEYFNGTIRSPLSPFKTELDAKDFVIYKCVDSSEANSNLSFLPSGDSFTPEASEMSDGDKKEEFSLDTYYSQLQEPSSSNLDNSIVAITQLPQNNKSARDLMNTCVLGYAHVSKFDDTKSKMKVLLPFPGALPRNILISTSVGYTE.

ATP contacts are provided by residues E34, K73, and 157–162 (HSGKTS).

The protein belongs to the Clp1 family. Clp1 subfamily. In terms of assembly, component of a pre-mRNA cleavage factor complex. Interacts directly with PCF11.

The protein resides in the nucleus. Functionally, required for endonucleolytic cleavage during polyadenylation-dependent pre-mRNA 3'-end formation. The sequence is that of mRNA cleavage and polyadenylation factor CLP1 from Debaryomyces hansenii (strain ATCC 36239 / CBS 767 / BCRC 21394 / JCM 1990 / NBRC 0083 / IGC 2968) (Yeast).